Here is a 512-residue protein sequence, read N- to C-terminus: Cytochrome P450 monooxygenase 208 (512 aa).

A helical membrane pass occupies residues 4–24 (LFLVLDTGAAVLLVALLFVVY). Heme is bound at residue Cys438.

Belongs to the cytochrome P450 family. Heme serves as cofactor.

Its subcellular location is the membrane. The protein operates within secondary metabolite biosynthesis. Cytochrome P450 monooxygenase that is able to use 7-ethoxycoumarin as a substrate for oxidation. The chain is Cytochrome P450 monooxygenase 208 from Postia placenta (strain ATCC 44394 / Madison 698-R) (Brown rot fungus).